The primary structure comprises 84 residues: Toxin BmKaTx16 (84 aa).

The first 19 residues, 1-19 (MNYLVMISFALLLMTGVES), serve as a signal peptide directing secretion. An LCN-type CS-alpha/beta domain is found at 21–83 (RDAYIAKPHN…VPIRVPGKCH (63 aa)). 4 disulfide bridges follow: Cys31/Cys82, Cys35/Cys55, Cys41/Cys65, and Cys45/Cys67. Residue Arg84 is a propeptide, removed by a carboxypeptidase.

The protein belongs to the long (4 C-C) scorpion toxin superfamily. Sodium channel inhibitor family. Alpha subfamily. Expressed by the venom gland.

It is found in the secreted. Functionally, alpha toxins bind voltage-independently at site-3 of sodium channels (Nav) and inhibit the inactivation of the activated channels, thereby blocking neuronal transmission. The protein is Toxin BmKaTx16 of Olivierus martensii (Manchurian scorpion).